Consider the following 196-residue polypeptide: Phosphatidyl-N-methylethanolamine N-methyltransferase (196 aa).

Position 1 (Met-1) is a topological domain, lumenal. The helical intramembrane region spans 2–28 (AIFEINNSFLICAVSIALNPLLWNIAA). The Lumenal portion of the chain corresponds to 29–40 (RSEYNHKTLTKL). Residues 41-62 (ANGDSKKACYMLAACIFVAGIV) form a helical membrane-spanning segment. The Cytoplasmic segment spans residues 63 to 89 (RDLIYQNALKQQPTLGIFMNPLVQGIA). The chain crosses the membrane as a helical span at residues 90–110 (KLIFCFGSVLVLSSMYKLGLV). An S-adenosyl-L-methionine-binding site is contributed by 94–96 (CFG). The Lumenal portion of the chain corresponds to 111–153 (GTYLGDYFGFLLPERVSGFPFNVNDNPMYNGSTLCFLSTALRY). The chain crosses the membrane as a helical span at residues 154–174 (GKVAGLLLTLEVFFVYRIALK). At 175 to 196 (FEEPFTAKIYAARDSKQAKKSE) the chain is on the cytoplasmic side. 176-177 (EE) contributes to the S-adenosyl-L-methionine binding site.

It belongs to the class VI-like SAM-binding methyltransferase superfamily. PEMT/PEM2 methyltransferase family.

The protein resides in the endoplasmic reticulum membrane. It is found in the mitochondrion membrane. The enzyme catalyses a 1,2-diacyl-sn-glycero-3-phospho-N-methylethanolamine + S-adenosyl-L-methionine = a 1,2-diacyl-sn-glycero-3-phospho-N,N-dimethylethanolamine + S-adenosyl-L-homocysteine + H(+). It catalyses the reaction a 1,2-diacyl-sn-glycero-3-phospho-N,N-dimethylethanolamine + S-adenosyl-L-methionine = a 1,2-diacyl-sn-glycero-3-phosphocholine + S-adenosyl-L-homocysteine + H(+). The protein operates within phospholipid metabolism; phosphatidylcholine biosynthesis. Its function is as follows. Catalyzes the second two steps of the methylation pathway of phosphatidylcholine biosynthesis, the SAM-dependent methylation of phosphatidylmonomethylethanolamine (PMME) to phosphatidyldimethylethanolamine (PDME) and of PDME to phosphatidylcholine (PC). This is Phosphatidyl-N-methylethanolamine N-methyltransferase from Schizosaccharomyces pombe (strain 972 / ATCC 24843) (Fission yeast).